Reading from the N-terminus, the 842-residue chain is Glucans biosynthesis glucosyltransferase H (842 aa).

The next 7 membrane-spanning stretches (helical) occupy residues 140-160, 194-214, 513-533, 568-588, 615-635, 656-676, and 680-700; these read ILLL…KTIL, ILIL…TALM, VFLT…FLAL, IALF…SIIL, VLLA…AFLG, FMRH…MAWL, and FLFW…VSAI.

It belongs to the glycosyltransferase 2 family. OpgH subfamily.

The protein localises to the cell inner membrane. The protein operates within glycan metabolism; osmoregulated periplasmic glucan (OPG) biosynthesis. Its function is as follows. Involved in the biosynthesis of osmoregulated periplasmic glucans (OPGs). This Klebsiella pneumoniae subsp. pneumoniae (strain ATCC 700721 / MGH 78578) protein is Glucans biosynthesis glucosyltransferase H.